Reading from the N-terminus, the 126-residue chain is Holo-[acyl-carrier-protein] synthase (126 aa).

The Mg(2+) site is built by D8 and E57.

It belongs to the P-Pant transferase superfamily. AcpS family. Mg(2+) is required as a cofactor.

Its subcellular location is the cytoplasm. The catalysed reaction is apo-[ACP] + CoA = holo-[ACP] + adenosine 3',5'-bisphosphate + H(+). Transfers the 4'-phosphopantetheine moiety from coenzyme A to a Ser of acyl-carrier-protein. This Geobacter sulfurreducens (strain ATCC 51573 / DSM 12127 / PCA) protein is Holo-[acyl-carrier-protein] synthase.